A 529-amino-acid chain; its full sequence is uncharacterized protein (529 aa).

Residues 178–186 (TSGTTGQPK), Asp-401, Arg-416, and Lys-510 contribute to the ATP site.

It belongs to the ATP-dependent AMP-binding enzyme family.

This is an uncharacterized protein from Bacillus subtilis (strain 168).